A 153-amino-acid polypeptide reads, in one-letter code: Hsp90 co-chaperone HCH1 (153 aa).

Belongs to the AHA1 family. Monomer. Interacts with HSP82.

The protein localises to the cytoplasm. It is found in the nucleus. Its function is as follows. Co-chaperone that binds to the molecular chaperone HSP82 and stimulates its ATPase activity. Although not essential, it confers thermotolerance when intracellular levels of HSP82 are limiting. This is Hsp90 co-chaperone HCH1 (HCH1) from Saccharomyces cerevisiae (strain ATCC 204508 / S288c) (Baker's yeast).